We begin with the raw amino-acid sequence, 163 residues long: Transcriptional repressor NrdR (163 aa).

The segment at 3 to 34 (CPFCAYADTRVVDSRLADDGGSVRRRRECPQC) is a zinc-finger region. One can recognise an ATP-cone domain in the interval 49-139 (PVVVKTDGRR…VYRRFEDVDA (91 aa)).

The protein belongs to the NrdR family. Zn(2+) serves as cofactor.

Negatively regulates transcription of bacterial ribonucleotide reductase nrd genes and operons by binding to NrdR-boxes. In Acidithiobacillus ferrooxidans (strain ATCC 23270 / DSM 14882 / CIP 104768 / NCIMB 8455) (Ferrobacillus ferrooxidans (strain ATCC 23270)), this protein is Transcriptional repressor NrdR.